The chain runs to 543 residues: Probable E3 ubiquitin-protein ligase ARI9 (543 aa).

The segment at 1 to 26 (MDFSDDDMIDNKSGEENYSYGGGNES) is disordered. The tract at residues 124 to 332 (VNIQCGICFE…RHSGACNRFV (209 aa)) is TRIAD supradomain. Zn(2+) contacts are provided by Cys-128, Cys-131, Cys-145, His-147, Cys-150, Cys-153, Cys-173, Cys-178, Cys-217, Cys-222, Cys-240, Cys-242, Cys-247, Cys-250, His-255, Cys-260, Cys-287, and Cys-290. An RING-type 1 zinc finger spans residues 128–178 (CGICFESYTREEIARVSCGHPYCKTCWAGYITTKIEDGPGCLRVKCPEPSC). The IBR-type zinc-finger motif lies at 197 to 260 (EKYSRYILRS…SEDAHSPVDC (64 aa)). The RING-type 2; atypical zinc-finger motif lies at 287–317 (CPECKRPIEKNDGCNHMTCSAPCGHEFCWIC). Cys-300 is an active-site residue. Cys-305, Cys-309, Cys-314, Cys-317, His-324, and Cys-328 together coordinate Zn(2+).

The protein belongs to the RBR family. Ariadne subfamily. Requires Zn(2+) as cofactor.

The enzyme catalyses [E2 ubiquitin-conjugating enzyme]-S-ubiquitinyl-L-cysteine + [acceptor protein]-L-lysine = [E2 ubiquitin-conjugating enzyme]-L-cysteine + [acceptor protein]-N(6)-ubiquitinyl-L-lysine.. The protein operates within protein modification; protein ubiquitination. In terms of biological role, might act as an E3 ubiquitin-protein ligase, or as part of E3 complex, which accepts ubiquitin from specific E2 ubiquitin-conjugating enzymes and then transfers it to substrates. The sequence is that of Probable E3 ubiquitin-protein ligase ARI9 (ARI9) from Arabidopsis thaliana (Mouse-ear cress).